A 757-amino-acid chain; its full sequence is Polymeric immunoglobulin receptor (757 aa).

The first 18 residues, 1-18 (MSRLFLACLLAIFPVVSM), serve as a signal peptide directing secretion. Residues 19-126 (KSPIFGPEEV…RGLNFDVSLE (108 aa)) form the Ig-like V-type 1; required for binding to polymeric IgA and IgM domain. Topologically, residues 19–632 (KSPIFGPEEV…TGYSGSSKAL (614 aa)) are extracellular. Cystine bridges form between Cys40-Cys110, Cys56-Cys64, Cys152-Cys220, Cys257-Cys324, Cys271-Cys279, Cys370-Cys440, and Cys384-Cys394. Residue Asn83 is glycosylated (N-linked (GlcNAc...) asparagine). 4 consecutive Ig-like V-type domains span residues 145–237 (GRTV…DLQV), 250–341 (RSSV…VQAW), 353–457 (ASPS…LKVV), and 461–560 (PSLK…VYVA). N-linked (GlcNAc...) asparagine glycans are attached at residues Asn420 and Asn468. 3 disulfides stabilise this stretch: Cys481/Cys543, Cys485/Cys519, and Cys495/Cys502. The interval 607 to 627 (KDAAGGPGAPADPGRPTGYSG) is disordered. The helical transmembrane segment at 633 to 653 (VSTLVPLALVLVAGVVAIGVV) threads the bilayer. Residues 654-757 (RARHRKNVDR…AATQNGPTEA (104 aa)) are Cytoplasmic-facing. Phosphoserine occurs at positions 665, 674, 681, and 727. The span at 679-688 (ENSRDFEGRD) shows a compositional bias: basic and acidic residues. A disordered region spans residues 679 to 730 (ENSRDFEGRDNMGASPEAQETSLGGKDEFATTTEDTVESKEPKKAKRSSKEE).

As to quaternary structure, interacts (mainly via CDR1-like domain) with dimeric IgA. Interacts (mainly via CDR2-like domain) with pentameric IgM. Either free or part of the secretory IgA (sIgA) complex that consists of two, four or five IgA monomers, and two additional non-Ig polypeptides, namely the JCHAIN and the secretory component (the proteolytic product of PIGR). Free secretory component interacts with bacterial antigens toxA of C.difficile and eae of E.coli. In the absence of dimeric IgA, Ser-727 is phosphorylated which allows PIGR to function normally. In terms of processing, N-glycosylated. N-glycosylation is required for anchoring IgA molecules to mucus, but is not necessary for Ig binding. As to expression, found in mammary gland, jejunum, lung, kidney and small intestine.

It localises to the cell membrane. The protein localises to the secreted. Functionally, mediates selective transcytosis of polymeric IgA and IgM across mucosal epithelial cells. Binds polymeric IgA and IgM at the basolateral surface of epithelial cells. The complex is then transported across the cell to be secreted at the apical surface. During this process, a cleavage occurs that separates the extracellular (known as the secretory component) from the transmembrane segment. In terms of biological role, through its N-linked glycans ensures anchoring of secretory IgA (sIgA) molecules to mucus lining the epithelial surface to neutralize extracellular pathogens. On its own (free form) may act as a non-specific microbial scavenger to prevent pathogen interaction with epithelial cells. The chain is Polymeric immunoglobulin receptor (PIGR) from Bos taurus (Bovine).